The primary structure comprises 96 residues: NADH-ubiquinone oxidoreductase chain 4L (96 aa).

3 consecutive transmembrane segments (helical) span residues 1–21 (MNPT…AFYQ), 24–44 (LLSL…LMAI), and 57–77 (LPLI…VLLV).

The protein belongs to the complex I subunit 4L family.

It is found in the mitochondrion membrane. The enzyme catalyses a ubiquinone + NADH + 5 H(+)(in) = a ubiquinol + NAD(+) + 4 H(+)(out). Functionally, core subunit of the mitochondrial membrane respiratory chain NADH dehydrogenase (Complex I) which catalyzes electron transfer from NADH through the respiratory chain, using ubiquinone as an electron acceptor. Part of the enzyme membrane arm which is embedded in the lipid bilayer and involved in proton translocation. In Myxine glutinosa (Atlantic hagfish), this protein is NADH-ubiquinone oxidoreductase chain 4L (MT-ND4L).